The sequence spans 89 residues: Phosphocarrier protein HPr (89 aa).

The HPr domain occupies 2 to 89; the sequence is AKFSAIITDK…TMIDTALIQG (88 aa). H15 acts as the Pros-phosphohistidine intermediate in catalysis. Residue S46 is modified to Phosphoserine; by HPrK/P.

It belongs to the HPr family.

The protein resides in the cytoplasm. With respect to regulation, phosphorylation on Ser-46 inhibits the phosphoryl transfer from enzyme I to HPr. Functionally, general (non sugar-specific) component of the phosphoenolpyruvate-dependent sugar phosphotransferase system (sugar PTS). This major carbohydrate active-transport system catalyzes the phosphorylation of incoming sugar substrates concomitantly with their translocation across the cell membrane. The phosphoryl group from phosphoenolpyruvate (PEP) is transferred to the phosphoryl carrier protein HPr by enzyme I. Phospho-HPr then transfers it to the PTS EIIA domain. P-Ser-HPr interacts with the catabolite control protein A (CcpA), forming a complex that binds to DNA at the catabolite response elements cre, operator sites preceding a large number of catabolite-regulated genes. Thus, P-Ser-HPr is a corepressor in carbon catabolite repression (CCR), a mechanism that allows bacteria to coordinate and optimize the utilization of available carbon sources. P-Ser-HPr also plays a role in inducer exclusion, in which it probably interacts with several non-PTS permeases and inhibits their transport activity. In Mycoplasma capricolum subsp. capricolum (strain California kid / ATCC 27343 / NCTC 10154), this protein is Phosphocarrier protein HPr (ptsH).